The following is a 317-amino-acid chain: Universal stress protein MT2052 (317 aa).

ATP contacts are provided by residues Gly13, 128 to 134 (GYRGQGA), 142 to 143 (SV), Gly175, Asp208, 277 to 283 (GSHGRGG), and 291 to 293 (SVS).

This sequence belongs to the universal stress protein A family.

This is Universal stress protein MT2052 from Mycobacterium tuberculosis (strain CDC 1551 / Oshkosh).